Here is a 307-residue protein sequence, read N- to C-terminus: UPF0749 protein MT1871 (307 aa).

Positions 1–23 are cleaved as a signal peptide; sequence MAESDRLLGGYDPNAGYSAHAGA. A run of 2 helical transmembrane segments spans residues 67–87 and 152–172; these read VSWM…AAAV and VLSL…VTVT.

The protein belongs to the UPF0749 family.

It localises to the cell membrane. The protein is UPF0749 protein MT1871 of Mycobacterium tuberculosis (strain CDC 1551 / Oshkosh).